A 319-amino-acid chain; its full sequence is MKILLANPRGFCAGVYRAISIVESALKIYGPPIYVRHEVVHNRYVVEDLRKRGAIFIEHISQVPDGSVLIFSAHGVSQAVKAQAKARQLKILFDATCPLVTKVHMEVLRASRKGQEAILIGHAGHPEVEGTMGQYDNASAGVYLVESVEDVNQLKVKDENNLCFMTQTTLSVDDTLEITSALQKRFPKIIGPRKDDICYATTNRQQAVRELSEKSDMVLVVGSKNSSNSNRLAELAKRMGKPAYLIDSDADIHADWLKNIKYIGVTAGASAPDVLVQKVIITLQSLGADESIEMMGQEENIVFEIPKQLRIHATEISCS.

Position 12 (cysteine 12) interacts with [4Fe-4S] cluster. Histidine 41 and histidine 74 together coordinate (2E)-4-hydroxy-3-methylbut-2-enyl diphosphate. Positions 41 and 74 each coordinate dimethylallyl diphosphate. 2 residues coordinate isopentenyl diphosphate: histidine 41 and histidine 74. [4Fe-4S] cluster is bound at residue cysteine 97. (2E)-4-hydroxy-3-methylbut-2-enyl diphosphate is bound at residue histidine 125. Histidine 125 provides a ligand contact to dimethylallyl diphosphate. Histidine 125 is a binding site for isopentenyl diphosphate. The active-site Proton donor is glutamate 127. A (2E)-4-hydroxy-3-methylbut-2-enyl diphosphate-binding site is contributed by threonine 168. Cysteine 198 lines the [4Fe-4S] cluster pocket. Residues serine 226, serine 227, asparagine 228, and serine 270 each coordinate (2E)-4-hydroxy-3-methylbut-2-enyl diphosphate. Residues serine 226, serine 227, asparagine 228, and serine 270 each contribute to the dimethylallyl diphosphate site. 4 residues coordinate isopentenyl diphosphate: serine 226, serine 227, asparagine 228, and serine 270.

The protein belongs to the IspH family. In terms of assembly, homodimer. The cofactor is [4Fe-4S] cluster.

It carries out the reaction isopentenyl diphosphate + 2 oxidized [2Fe-2S]-[ferredoxin] + H2O = (2E)-4-hydroxy-3-methylbut-2-enyl diphosphate + 2 reduced [2Fe-2S]-[ferredoxin] + 2 H(+). It catalyses the reaction dimethylallyl diphosphate + 2 oxidized [2Fe-2S]-[ferredoxin] + H2O = (2E)-4-hydroxy-3-methylbut-2-enyl diphosphate + 2 reduced [2Fe-2S]-[ferredoxin] + 2 H(+). It functions in the pathway isoprenoid biosynthesis; dimethylallyl diphosphate biosynthesis; dimethylallyl diphosphate from (2E)-4-hydroxy-3-methylbutenyl diphosphate: step 1/1. Its pathway is isoprenoid biosynthesis; isopentenyl diphosphate biosynthesis via DXP pathway; isopentenyl diphosphate from 1-deoxy-D-xylulose 5-phosphate: step 6/6. Catalyzes the conversion of 1-hydroxy-2-methyl-2-(E)-butenyl 4-diphosphate (HMBPP) into a mixture of isopentenyl diphosphate (IPP) and dimethylallyl diphosphate (DMAPP). Acts in the terminal step of the DOXP/MEP pathway for isoprenoid precursor biosynthesis. The protein is 4-hydroxy-3-methylbut-2-enyl diphosphate reductase of Hamiltonella defensa subsp. Acyrthosiphon pisum (strain 5AT).